We begin with the raw amino-acid sequence, 227 residues long: 2-C-methyl-D-erythritol 4-phosphate cytidylyltransferase (227 aa).

The protein belongs to the IspD/TarI cytidylyltransferase family. IspD subfamily.

It catalyses the reaction 2-C-methyl-D-erythritol 4-phosphate + CTP + H(+) = 4-CDP-2-C-methyl-D-erythritol + diphosphate. The protein operates within isoprenoid biosynthesis; isopentenyl diphosphate biosynthesis via DXP pathway; isopentenyl diphosphate from 1-deoxy-D-xylulose 5-phosphate: step 2/6. In terms of biological role, catalyzes the formation of 4-diphosphocytidyl-2-C-methyl-D-erythritol from CTP and 2-C-methyl-D-erythritol 4-phosphate (MEP). This chain is 2-C-methyl-D-erythritol 4-phosphate cytidylyltransferase, found in Bordetella parapertussis (strain 12822 / ATCC BAA-587 / NCTC 13253).